Reading from the N-terminus, the 205-residue chain is Putative 3-methyladenine DNA glycosylase (205 aa).

Belongs to the DNA glycosylase MPG family.

The chain is Putative 3-methyladenine DNA glycosylase from Bacillus anthracis (strain A0248).